The sequence spans 925 residues: Periplasmic nitrate reductase (925 aa).

The tat-type signal signal peptide spans 1-30 (MDRREFIKSSAAAAACSAAGIAVPSSLSAA). The 57-residue stretch at 36-92 (WRWDKSACRFCGTGCGIMVATKNGKIVAVKGDPLAPVNRGLNCIKGYFNAKIMYGED) folds into the 4Fe-4S Mo/W bis-MGD-type domain. [4Fe-4S] cluster-binding residues include Cys-43, Cys-46, Cys-50, and Cys-78. Residues Lys-80, Gln-148, Asn-173, Cys-177, 210 to 217 (WGANMAEM), Met-418, Gln-422, Asn-528, 553 to 554 (SD), Lys-576, Asp-603, and 815 to 824 (TGRVLEHWHS) contribute to the Mo-bis(molybdopterin guanine dinucleotide) site. Trp-891 is a substrate binding site. Asn-899 and Lys-916 together coordinate Mo-bis(molybdopterin guanine dinucleotide).

The protein belongs to the prokaryotic molybdopterin-containing oxidoreductase family. NasA/NapA/NarB subfamily. As to quaternary structure, component of the periplasmic nitrate reductase NapAB complex composed of NapA and NapB. It depends on [4Fe-4S] cluster as a cofactor. Mo-bis(molybdopterin guanine dinucleotide) is required as a cofactor. Post-translationally, predicted to be exported by the Tat system. The position of the signal peptide cleavage has not been experimentally proven.

The protein resides in the periplasm. The catalysed reaction is 2 Fe(II)-[cytochrome] + nitrate + 2 H(+) = 2 Fe(III)-[cytochrome] + nitrite + H2O. Its function is as follows. Catalytic subunit of the periplasmic nitrate reductase complex NapAB. Receives electrons from NapB and catalyzes the reduction of nitrate to nitrite. The protein is Periplasmic nitrate reductase of Campylobacter fetus subsp. fetus (strain 82-40).